The primary structure comprises 21 residues: Neuropeptide gamma (21 aa).

The tract at residues 1–21 is disordered; that stretch reads SSANPQITRKRHKINSFVGLM. The residue at position 21 (Met21) is a Methionine amide.

This sequence belongs to the tachykinin family.

The protein localises to the secreted. Functionally, tachykinins are active peptides which excite neurons, evoke behavioral responses, and contract (directly or indirectly) many smooth muscles. Is a potent vasoconstrictor and secretagogue that plays a regulatory role in the central control of ventilation, in particular, the heart rate variability (HRV). The chain is Neuropeptide gamma from Oncorhynchus mykiss (Rainbow trout).